The primary structure comprises 27 residues: Delta-conotoxin TsVIA (27 aa).

3 disulfide bridges follow: C1–C17, C8–C21, and C16–C25.

Belongs to the conotoxin O1 superfamily. Expressed by the venom duct.

The protein localises to the secreted. Delta-conotoxins bind to site 6 of voltage-gated sodium channels (Nav) and inhibit the inactivation process. This toxin inhibits tetrodotoxin(TTX)-sensitive sodium channels. A test on mouse Nav1.6/SCN8A confirms this sensitivity. The chain is Delta-conotoxin TsVIA from Conus tessulatus (Tessellate cone).